Consider the following 344-residue polypeptide: Photosystem II protein D1 (344 aa).

3 helical membrane passes run 29–46 (YIGWFGVLMVPTLLTATT), 118–133 (HFFIGVCSYMGREWEL), and 142–156 (WIAVAYSAPVAAATA). Residue His-118 participates in chlorophyll a binding. Tyr-126 provides a ligand contact to pheophytin a. Residues Asp-170 and Glu-189 each contribute to the [CaMn4O5] cluster site. Residues 197–218 (FHMLGVAGVFGGSLFSAMHGSL) traverse the membrane as a helical segment. Residue His-198 coordinates chlorophyll a. A quinone is bound by residues His-215 and 264–265 (SF). His-215 contacts Fe cation. Residue His-272 coordinates Fe cation. Residues 274 to 288 (FLAAWPVIGIWFTAM) traverse the membrane as a helical segment. [CaMn4O5] cluster-binding residues include His-332, Glu-333, Asp-342, and Ala-344.

It belongs to the reaction center PufL/M/PsbA/D family. As to quaternary structure, PSII is composed of 1 copy each of membrane proteins PsbA, PsbB, PsbC, PsbD, PsbE, PsbF, PsbH, PsbI, PsbJ, PsbK, PsbL, PsbM, PsbT, PsbY, PsbZ, Psb30/Ycf12, at least 3 peripheral proteins of the oxygen-evolving complex and a large number of cofactors. It forms dimeric complexes. The D1/D2 heterodimer binds P680, chlorophylls that are the primary electron donor of PSII, and subsequent electron acceptors. It shares a non-heme iron and each subunit binds pheophytin, quinone, additional chlorophylls, carotenoids and lipids. D1 provides most of the ligands for the Mn4-Ca-O5 cluster of the oxygen-evolving complex (OEC). There is also a Cl(-1) ion associated with D1 and D2, which is required for oxygen evolution. The PSII complex binds additional chlorophylls, carotenoids and specific lipids. is required as a cofactor. Tyr-161 forms a radical intermediate that is referred to as redox-active TyrZ, YZ or Y-Z.

The protein resides in the plastid. It is found in the chloroplast thylakoid membrane. It carries out the reaction 2 a plastoquinone + 4 hnu + 2 H2O = 2 a plastoquinol + O2. Functionally, photosystem II (PSII) is a light-driven water:plastoquinone oxidoreductase that uses light energy to abstract electrons from H(2)O, generating O(2) and a proton gradient subsequently used for ATP formation. It consists of a core antenna complex that captures photons, and an electron transfer chain that converts photonic excitation into a charge separation. The D1/D2 (PsbA/PsbD) reaction center heterodimer binds P680, the primary electron donor of PSII as well as several subsequent electron acceptors. The sequence is that of Photosystem II protein D1 from Bigelowiella natans (Pedinomonas minutissima).